We begin with the raw amino-acid sequence, 2273 residues long: Nonribosomal peptide synthetase hasD (2273 aa).

Residues 100–446 (FHDQLQKHSS…AGLGLALGYF (347 aa)) are adenylation 1. Residues 588-664 (ERGLGAVESV…NIAAAVVELS (77 aa)) enclose the Carrier 1 domain. Position 625 is an O-(pantetheine 4'-phosphoryl)serine (S625). Positions 696–1120 (IAPMTDMQTR…AAQPDTDLSN (425 aa)) are condensation 1. Residues 1156-1487 (ENSIQAHPDI…SGVQVTPGYL (332 aa)) form an adenylation 2 region. Residues 1634–1714 (DLETDTQRVL…DLSLAIDELV (81 aa)) enclose the Carrier 2 domain. At S1673 the chain carries O-(pantetheine 4'-phosphoryl)serine. The tract at residues 1735–2127 (GQLPLSYLEK…QDLEVDMEYD (393 aa)) is condensation 2. The interval 2174–2200 (PVGLTPSHEGSAELTNGTNKTDSTTGQ) is disordered. Residues 2186-2200 (ELTNGTNKTDSTTGQ) are compositionally biased toward polar residues. One can recognise a Carrier 3 domain in the interval 2201-2273 (QELENNLTDV…LELATCAVII (73 aa)). At S2235 the chain carries O-(pantetheine 4'-phosphoryl)serine.

The protein belongs to the NRP synthetase family. Requires pantetheine 4'-phosphate as cofactor.

The protein operates within secondary metabolite biosynthesis. Functionally, nonribosomal peptide synthetase; part of the gene cluster that mediates the biosynthesis of hexadehydro-astechrome (HAS), a tryptophan-derived iron(III)-complex that acts as a virulence factor in infected mice. Within the pathway, the NRPS condenses tryptophan and alanine to produce the Trp-Ala dipeptide. The 7-dimethylallyltryptophan synthase hasE then catalyzes the prenylation of the hasD-tethered tryptophan or the resulting tethered Trp-Ala dipeptide at the C-7 position of the indole moiety. HAS biosynthesis continues via tethered intermediates with the succesive actions of the cytochrome P450 monooxygenase hasH, the O-methyltransferase hasC, and the FAD-linked oxidoreductase hasG. The resulting O-methylated diketopiperazine is then released from hasD. Finally, three O-methylated diketopiperazine molecules assemble in a trimeric complex with Fe(III) to produce hexadehydro-astechrome. This is Nonribosomal peptide synthetase hasD from Aspergillus fumigatus (strain CBS 144.89 / FGSC A1163 / CEA10) (Neosartorya fumigata).